The following is a 405-amino-acid chain: Putative arsenical pump-driving ATPase (405 aa).

Residue 8–15 (GKGGVGKT) coordinates ATP.

Belongs to the arsA ATPase family.

The enzyme catalyses arsenite(in) + ATP + H2O = arsenite(out) + ADP + phosphate + H(+). Its function is as follows. Anion-transporting ATPase. Catalyzes the extrusion of arsenite. This chain is Putative arsenical pump-driving ATPase, found in Prosthecochloris vibrioformis (Chlorobium vibrioforme).